The chain runs to 362 residues: 3-dehydroquinate synthase (362 aa).

NAD(+)-binding positions include 71–76 (DGEQYK), 105–109 (GVVGD), 129–130 (TT), K142, K151, and 169–172 (CLKT). E184, H247, and H264 together coordinate Zn(2+).

It belongs to the sugar phosphate cyclases superfamily. Dehydroquinate synthase family. Co(2+) is required as a cofactor. Requires Zn(2+) as cofactor. The cofactor is NAD(+).

The protein localises to the cytoplasm. It catalyses the reaction 7-phospho-2-dehydro-3-deoxy-D-arabino-heptonate = 3-dehydroquinate + phosphate. The protein operates within metabolic intermediate biosynthesis; chorismate biosynthesis; chorismate from D-erythrose 4-phosphate and phosphoenolpyruvate: step 2/7. Catalyzes the conversion of 3-deoxy-D-arabino-heptulosonate 7-phosphate (DAHP) to dehydroquinate (DHQ). This Escherichia coli (strain 55989 / EAEC) protein is 3-dehydroquinate synthase.